Reading from the N-terminus, the 321-residue chain is Acetyl-coenzyme A carboxylase carboxyl transferase subunit alpha (321 aa).

The 262-residue stretch at 37-298 folds into the CoA carboxyltransferase C-terminal domain; it reads DLDDEIKRLQ…KQRILSDLED (262 aa).

This sequence belongs to the AccA family. As to quaternary structure, acetyl-CoA carboxylase is a heterohexamer composed of biotin carboxyl carrier protein (AccB), biotin carboxylase (AccC) and two subunits each of ACCase subunit alpha (AccA) and ACCase subunit beta (AccD).

The protein localises to the cytoplasm. The catalysed reaction is N(6)-carboxybiotinyl-L-lysyl-[protein] + acetyl-CoA = N(6)-biotinyl-L-lysyl-[protein] + malonyl-CoA. It participates in lipid metabolism; malonyl-CoA biosynthesis; malonyl-CoA from acetyl-CoA: step 1/1. Functionally, component of the acetyl coenzyme A carboxylase (ACC) complex. First, biotin carboxylase catalyzes the carboxylation of biotin on its carrier protein (BCCP) and then the CO(2) group is transferred by the carboxyltransferase to acetyl-CoA to form malonyl-CoA. The sequence is that of Acetyl-coenzyme A carboxylase carboxyl transferase subunit alpha from Mannheimia succiniciproducens (strain KCTC 0769BP / MBEL55E).